A 123-amino-acid chain; its full sequence is MPTIKQLIRNTRQPIRNVTKSPALRGCPQRRGTCTRVYTINPKKPNSALRKVARVRLTSGFEITAYIPGIGHNSQEHSVVLVRGGRVKDLPGVRYHIVRGTLDAVGVKDRQQGRSKYGVKRPK.

The protein belongs to the universal ribosomal protein uS12 family. In terms of assembly, part of the 30S ribosomal subunit.

It localises to the plastid. The protein localises to the chloroplast. Functionally, with S4 and S5 plays an important role in translational accuracy. Located at the interface of the 30S and 50S subunits. This chain is Small ribosomal subunit protein uS12c (rps12), found in Oenothera elata subsp. hookeri (Hooker's evening primrose).